The primary structure comprises 374 residues: Ribosomal RNA large subunit methyltransferase G (374 aa).

It belongs to the methyltransferase superfamily. RlmG family.

The protein resides in the cytoplasm. The catalysed reaction is guanosine(1835) in 23S rRNA + S-adenosyl-L-methionine = N(2)-methylguanosine(1835) in 23S rRNA + S-adenosyl-L-homocysteine + H(+). Functionally, specifically methylates the guanine in position 1835 (m2G1835) of 23S rRNA. In Pseudomonas putida (strain GB-1), this protein is Ribosomal RNA large subunit methyltransferase G.